Reading from the N-terminus, the 421-residue chain is 4-methylaminobutanoate oxidase (methylamine-forming) (421 aa).

4 residues coordinate FAD: glutamate 31, arginine 33, arginine 39, and glutamate 379.

This sequence belongs to the flavin monoamine oxidase family. Monomer. FAD serves as cofactor.

It catalyses the reaction 4-(methylamino)butanoate + O2 + H2O = succinate semialdehyde + methylamine + H2O2. It functions in the pathway alkaloid degradation; nicotine degradation. Its function is as follows. Catalyzes the removal of methylamine from 4-methylaminobutanoate with the formation of succinate semialdehyde. Is involved in the catabolism of 4-methylaminobutanoate produced from nicotine. Has a very weak monoamine oxidase activity with 4-aminobutanoate. Cannot use spermidine, spermine, sarcosine, dimethylglycine, glycine, choline, betaine, alpha-methylamino isobutyrate, methylamine propionitrile and methylamino propylamine as substrate. The protein is 4-methylaminobutanoate oxidase (methylamine-forming) (mao) of Paenarthrobacter nicotinovorans (Arthrobacter nicotinovorans).